The chain runs to 910 residues: Dimethylsulfide dehydrogenase subunit alpha (910 aa).

Residues 1-28 (MLRTTRRTLMQGASLVGAGLFAAGRGWA) constitute a signal peptide (tat-type signal). Positions 59 to 123 (DYVGKAAHCI…IHSTSMYEAD (65 aa)) constitute a 4Fe-4S Mo/W bis-MGD-type domain. Residues H66, C70, C74, and C109 each contribute to the [4Fe-4S] cluster site.

The protein belongs to the prokaryotic molybdopterin-containing oxidoreductase family. Heterotrimer of alpha, beta and gamma subunits. [4Fe-4S] cluster serves as cofactor. The cofactor is Mo-bis(molybdopterin guanine dinucleotide). Post-translationally, predicted to be exported by the Tat system. The position of the signal peptide cleavage has been experimentally proven.

It localises to the periplasm. It carries out the reaction 2 Fe(III)-[cytochrome c2] + dimethyl sulfide + H2O = 2 Fe(II)-[cytochrome c2] + dimethyl sulfoxide + 2 H(+). Its function is as follows. Allows photoautotrophic growth on dimethyl sulfide (DMS) as the sole electron donor. The sequence is that of Dimethylsulfide dehydrogenase subunit alpha (ddhA) from Rhodovulum sulfidophilum (Rhodobacter sulfidophilus).